The primary structure comprises 317 residues: Ferrochelatase (317 aa).

2 residues coordinate Fe cation: His192 and Glu271.

This sequence belongs to the ferrochelatase family.

It localises to the cytoplasm. The enzyme catalyses heme b + 2 H(+) = protoporphyrin IX + Fe(2+). It functions in the pathway porphyrin-containing compound metabolism; protoheme biosynthesis; protoheme from protoporphyrin-IX: step 1/1. In terms of biological role, catalyzes the ferrous insertion into protoporphyrin IX. The protein is Ferrochelatase of Geobacter sp. (strain M21).